The sequence spans 346 residues: Beta-ketoacyl-[acyl-carrier-protein] synthase III (346 aa).

Residues Cys-120 and His-256 contribute to the active site. Residues 257–261 (QANIR) are ACP-binding. Asn-286 is a catalytic residue.

This sequence belongs to the thiolase-like superfamily. FabH family. As to quaternary structure, homodimer.

Its subcellular location is the cytoplasm. The enzyme catalyses malonyl-[ACP] + acetyl-CoA + H(+) = 3-oxobutanoyl-[ACP] + CO2 + CoA. The protein operates within lipid metabolism; fatty acid biosynthesis. Functionally, catalyzes the condensation reaction of fatty acid synthesis by the addition to an acyl acceptor of two carbons from malonyl-ACP. Catalyzes the first condensation reaction which initiates fatty acid synthesis and may therefore play a role in governing the total rate of fatty acid production. Possesses both acetoacetyl-ACP synthase and acetyl transacylase activities. Its substrate specificity determines the biosynthesis of branched-chain and/or straight-chain of fatty acids. This is Beta-ketoacyl-[acyl-carrier-protein] synthase III from Deinococcus geothermalis (strain DSM 11300 / CIP 105573 / AG-3a).